Reading from the N-terminus, the 198-residue chain is Small ribosomal subunit protein eS1 (198 aa).

It belongs to the eukaryotic ribosomal protein eS1 family.

The sequence is that of Small ribosomal subunit protein eS1 from Methanosphaerula palustris (strain ATCC BAA-1556 / DSM 19958 / E1-9c).